A 194-amino-acid chain; its full sequence is UPF0301 protein FTH_1193 (194 aa).

Belongs to the UPF0301 (AlgH) family.

In Francisella tularensis subsp. holarctica (strain OSU18), this protein is UPF0301 protein FTH_1193.